The primary structure comprises 618 residues: MSAGPQSDFDGKAFAAQLSTAPGVYRMYAGDDTLLYVGKAGALRKRVGSYFNGTPKNARLTSMLSQVARMDVTVTRSEAEALLLENQLIKSLSPRYNVSLRDDKSYPYVLLTREHWPRIALHRGPRAVQGRYFGPYTGVTGVRETLSLMHKLFKLRSCEDSVFRNRSRPCLQYQIGRCSGPCVDLVAAPDYAESVRRATMFLEGKSDQLGEEIMQSMQQASEALEFERAARLRDLLSSLRSMQNRQYVDGRAADLDVLACATQSSQACVLLLSFRDGRNLGTRSFFPKTNGEDSADEILGAFVSQYYAEHSPPREILLDREIPETELIEAALSTAAEHKVALKWNVRGERAGYLLLATRNAQLTLVTELTSQSAQHARSEALREMLGLAEPVKRVECFDISHTMGEATVASCVVFDASGPVRGQYRRFNISGITPGDDYAAMRQAIERRFRRAVEENGVLPDVLLIDGGAGQLAQAQAALADLGVENVWLVGVAKGEERRAGHEALIMADGRELRPGAASPALQFIQQVRDEAHRFAITGHRGRRQKARMTSKLEDIPGIGPRRRASLLKHFGGLVGLKAAGEAEIARVEGVNAALAARIYANLHGLALPDAAGESSP.

The region spanning 20 to 98 is the GIY-YIG domain; sequence TAPGVYRMYA…IKSLSPRYNV (79 aa). The region spanning 207–242 is the UVR domain; it reads DQLGEEIMQSMQQASEALEFERAARLRDLLSSLRSM.

It belongs to the UvrC family. In terms of assembly, interacts with UvrB in an incision complex.

Its subcellular location is the cytoplasm. Functionally, the UvrABC repair system catalyzes the recognition and processing of DNA lesions. UvrC both incises the 5' and 3' sides of the lesion. The N-terminal half is responsible for the 3' incision and the C-terminal half is responsible for the 5' incision. This is UvrABC system protein C from Xanthomonas oryzae pv. oryzae (strain MAFF 311018).